Reading from the N-terminus, the 250-residue chain is UPF0736 protein YjbA (250 aa).

Belongs to the UPF0736 family.

The polypeptide is UPF0736 protein YjbA (yjbA) (Bacillus subtilis (strain 168)).